The sequence spans 217 residues: Uracil-DNA glycosylase (217 aa).

Asp-62 (proton acceptor) is an active-site residue.

Belongs to the uracil-DNA glycosylase (UDG) superfamily. UNG family.

It localises to the cytoplasm. It catalyses the reaction Hydrolyzes single-stranded DNA or mismatched double-stranded DNA and polynucleotides, releasing free uracil.. Functionally, excises uracil residues from the DNA which can arise as a result of misincorporation of dUMP residues by DNA polymerase or due to deamination of cytosine. The polypeptide is Uracil-DNA glycosylase (Streptococcus equi subsp. equi (strain 4047)).